The primary structure comprises 177 residues: ATP-dependent protease subunit HslV (177 aa).

Thr-5 is a catalytic residue. Na(+) contacts are provided by Gly-161, Cys-164, and Thr-167.

It belongs to the peptidase T1B family. HslV subfamily. As to quaternary structure, a double ring-shaped homohexamer of HslV is capped on each side by a ring-shaped HslU homohexamer. The assembly of the HslU/HslV complex is dependent on binding of ATP.

The protein localises to the cytoplasm. It catalyses the reaction ATP-dependent cleavage of peptide bonds with broad specificity.. With respect to regulation, allosterically activated by HslU binding. Its function is as follows. Protease subunit of a proteasome-like degradation complex believed to be a general protein degrading machinery. In Campylobacter concisus (strain 13826), this protein is ATP-dependent protease subunit HslV.